The primary structure comprises 851 residues: Receptor like protein kinase S.2 (851 aa).

One can recognise a Protein kinase 1 domain in the interval 117 to 436 (FSDELILGSG…LPSFKSHPLY (320 aa)). ATP contacts are provided by residues 123-131 (LGSGGFGRV) and lysine 146. Aspartate 248 (proton acceptor) is an active-site residue. Residues 448-471 (SATTTTTRTTMTTTTSTTSFNASS) form a disordered region. Residues 532-819 (FSDARRVAEV…SILDGSERFF (288 aa)) form the Protein kinase 2 domain. ATP-binding positions include 538–546 (VAEVDFGTA) and lysine 560.

It belongs to the protein kinase superfamily. Ser/Thr protein kinase family.

It carries out the reaction L-seryl-[protein] + ATP = O-phospho-L-seryl-[protein] + ADP + H(+). It catalyses the reaction L-threonyl-[protein] + ATP = O-phospho-L-threonyl-[protein] + ADP + H(+). The sequence is that of Receptor like protein kinase S.2 (LECRKS2) from Arabidopsis thaliana (Mouse-ear cress).